A 183-amino-acid polypeptide reads, in one-letter code: Protein GrpE (183 aa).

The span at 1-14 (MSNEENKINEEALK) shows a compositional bias: basic and acidic residues. Positions 1 to 20 (MSNEENKINEEALKQQDAAE) are disordered.

This sequence belongs to the GrpE family. Homodimer.

It is found in the cytoplasm. Its function is as follows. Participates actively in the response to hyperosmotic and heat shock by preventing the aggregation of stress-denatured proteins, in association with DnaK and GrpE. It is the nucleotide exchange factor for DnaK and may function as a thermosensor. Unfolded proteins bind initially to DnaJ; upon interaction with the DnaJ-bound protein, DnaK hydrolyzes its bound ATP, resulting in the formation of a stable complex. GrpE releases ADP from DnaK; ATP binding to DnaK triggers the release of the substrate protein, thus completing the reaction cycle. Several rounds of ATP-dependent interactions between DnaJ, DnaK and GrpE are required for fully efficient folding. In Vibrio vulnificus (strain CMCP6), this protein is Protein GrpE.